The following is a 296-amino-acid chain: Acetyl-coenzyme A carboxylase carboxyl transferase subunit beta (296 aa).

One can recognise a CoA carboxyltransferase N-terminal domain in the interval 25 to 294 (VWTKCTSCEQ…PFVEPELISE (270 aa)). Zn(2+)-binding residues include cysteine 29, cysteine 32, cysteine 48, and cysteine 51. A C4-type zinc finger spans residues 29 to 51 (CTSCEQVLYSEELKRNLYVCPKC).

Belongs to the AccD/PCCB family. In terms of assembly, acetyl-CoA carboxylase is a heterohexamer composed of biotin carboxyl carrier protein (AccB), biotin carboxylase (AccC) and two subunits each of ACCase subunit alpha (AccA) and ACCase subunit beta (AccD). It depends on Zn(2+) as a cofactor.

Its subcellular location is the cytoplasm. It catalyses the reaction N(6)-carboxybiotinyl-L-lysyl-[protein] + acetyl-CoA = N(6)-biotinyl-L-lysyl-[protein] + malonyl-CoA. It participates in lipid metabolism; malonyl-CoA biosynthesis; malonyl-CoA from acetyl-CoA: step 1/1. Functionally, component of the acetyl coenzyme A carboxylase (ACC) complex. Biotin carboxylase (BC) catalyzes the carboxylation of biotin on its carrier protein (BCCP) and then the CO(2) group is transferred by the transcarboxylase to acetyl-CoA to form malonyl-CoA. This Haemophilus influenzae (strain PittEE) protein is Acetyl-coenzyme A carboxylase carboxyl transferase subunit beta.